We begin with the raw amino-acid sequence, 355 residues long: Protein MxiC (355 aa).

The protein resides in the secreted. The protein localises to the host cell. In terms of biological role, necessary for the secretion of IPA invasins. The polypeptide is Protein MxiC (mxiC) (Shigella flexneri).